Here is a 261-residue protein sequence, read N- to C-terminus: 3-hydroxyacyl-CoA dehydrogenase type-2 (261 aa).

Ala-2 is subject to N-acetylalanine. Residues Ser-20, Leu-22, and Asp-41 each coordinate NAD(+). Lys-53 carries the N6-acetyllysine; alternate modification. N6-succinyllysine; alternate is present on Lys-53. The NAD(+) site is built by Asp-64 and Val-65. Lys-69 is modified (N6-acetyllysine). Cys-91 is a binding site for NAD(+). An N6-acetyllysine mark is found at Lys-99 and Lys-105. Residue Ser-155 participates in substrate binding. NAD(+) contacts are provided by Tyr-168, Lys-172, Phe-201, and Thr-203. Residue Tyr-168 is the Proton acceptor of the active site. Lys-212 carries the N6-acetyllysine; alternate modification. Position 212 is an N6-succinyllysine; alternate (Lys-212).

Belongs to the short-chain dehydrogenases/reductases (SDR) family. Homotetramer. Component of mitochondrial ribonuclease P, a complex composed of TRMT10C/MRPP1, HSD17B10/MRPP2 and PRORP/MRPP3. Interacts with TRMT10C/MRPP1; forming the MRPP1-MRPP2 subcomplex of the mitochondrial ribonuclease P complex.

It is found in the mitochondrion. The protein localises to the mitochondrion matrix. Its subcellular location is the mitochondrion nucleoid. It carries out the reaction a (3S)-3-hydroxyacyl-CoA + NAD(+) = a 3-oxoacyl-CoA + NADH + H(+). The catalysed reaction is (2S,3S)-3-hydroxy-2-methylbutanoyl-CoA + NAD(+) = 2-methyl-3-oxobutanoyl-CoA + NADH + H(+). The enzyme catalyses testosterone + NAD(+) = androst-4-ene-3,17-dione + NADH + H(+). It catalyses the reaction 5alpha-androstane-3alpha,17beta-diol + NAD(+) = 17beta-hydroxy-5alpha-androstan-3-one + NADH + H(+). It carries out the reaction 17beta-estradiol + NAD(+) = estrone + NADH + H(+). The catalysed reaction is cholate + NAD(+) = 3alpha,12alpha-dihydroxy-7-oxo-5beta-cholanate + NADH + H(+). The enzyme catalyses (3S)-3-hydroxybutanoyl-CoA + NAD(+) = acetoacetyl-CoA + NADH + H(+). It catalyses the reaction (3S)-hydroxyoctanoyl-CoA + NAD(+) = 3-oxooctanoyl-CoA + NADH + H(+). It carries out the reaction (3S)-hydroxyhexadecanoyl-CoA + NAD(+) = 3-oxohexadecanoyl-CoA + NADH + H(+). The catalysed reaction is 17beta-hydroxy-5alpha-androstan-3-one + NAD(+) = 5alpha-androstan-3,17-dione + NADH + H(+). The enzyme catalyses 5alpha-pregnan-20beta-ol-3-one + NAD(+) = 5alpha-pregnane-3,20-dione + NADH + H(+). It catalyses the reaction 3alpha-hydroxy-5alpha-pregnan-20-one + NAD(+) = 5alpha-pregnane-3,20-dione + NADH + H(+). It carries out the reaction cortisone + NAD(+) = 17alpha-hydroxypregn-4-en-3,11,20-trione-21-al + NADH + H(+). The catalysed reaction is 11-dehydrocorticosterone + NAD(+) = pregn-4-ene-3,11,20,21-tetraone + NADH + H(+). The enzyme catalyses cortisol + NAD(+) = 11beta,17alpha-dihydroxypregn-4-ene-3,20,21-trione + NADH + H(+). It catalyses the reaction chenodeoxycholate + NAD(+) = 7-oxolithocholate + NADH + H(+). It carries out the reaction ursodeoxycholate + NAD(+) = 7-oxolithocholate + NADH + H(+). The catalysed reaction is 3beta,7beta-dihydroxy-5beta-cholan-24-oate + NAD(+) = 3beta-hydroxy-7-oxo-5beta-cholan-24-oate + NADH + H(+). Its pathway is amino-acid degradation; L-isoleucine degradation. It participates in lipid metabolism; fatty acid beta-oxidation. The protein operates within steroid metabolism. It functions in the pathway lipid metabolism; bile acid biosynthesis. Mitochondrial dehydrogenase involved in pathways of fatty acid, branched-chain amino acid and steroid metabolism. Acts as (S)-3-hydroxyacyl-CoA dehydrogenase in mitochondrial fatty acid beta-oxidation, a major degradation pathway of fatty acids. Catalyzes the third step in the beta-oxidation cycle, namely the reversible conversion of (S)-3-hydroxyacyl-CoA to 3-ketoacyl-CoA. Preferentially accepts straight medium- and short-chain acyl-CoA substrates with highest efficiency for (3S)-hydroxybutanoyl-CoA. Acts as 3-hydroxy-2-methylbutyryl-CoA dehydrogenase in branched-chain amino acid catabolic pathway. Catalyzes the oxidation of 3-hydroxy-2-methylbutanoyl-CoA into 2-methyl-3-oxobutanoyl-CoA, a step in isoleucine degradation pathway. Has hydroxysteroid dehydrogenase activity toward steroid hormones and bile acids. Catalyzes the oxidation of 3alpha-, 17beta-, 20beta- and 21-hydroxysteroids and 7alpha- and 7beta-hydroxy bile acids. Oxidizes allopregnanolone/brexanolone at the 3alpha-hydroxyl group, which is known to be critical for the activation of gamma-aminobutyric acid receptors (GABAARs) chloride channel. Has phospholipase C-like activity toward cardiolipin and its oxidized species. Likely oxidizes the 2'-hydroxyl in the head group of cardiolipin to form a ketone intermediate that undergoes nucleophilic attack by water and fragments into diacylglycerol, dihydroxyacetone and orthophosphate. Has higher affinity for cardiolipin with oxidized fatty acids and may degrade these species during the oxidative stress response to protect cells from apoptosis. By interacting with intracellular amyloid-beta, it may contribute to the neuronal dysfunction associated with Alzheimer disease (AD). Essential for structural and functional integrity of mitochondria. Its function is as follows. In addition to mitochondrial dehydrogenase activity, moonlights as a component of mitochondrial ribonuclease P, a complex that cleaves tRNA molecules in their 5'-ends. Together with TRMT10C/MRPP1, forms a subcomplex of the mitochondrial ribonuclease P, named MRPP1-MRPP2 subcomplex, which displays functions that are independent of the ribonuclease P activity. The MRPP1-MRPP2 subcomplex catalyzes the formation of N(1)-methylguanine and N(1)-methyladenine at position 9 (m1G9 and m1A9, respectively) in tRNAs; HSD17B10/MRPP2 acting as a non-catalytic subunit. The MRPP1-MRPP2 subcomplex also acts as a tRNA maturation platform: following 5'-end cleavage by the mitochondrial ribonuclease P complex, the MRPP1-MRPP2 subcomplex enhances the efficiency of 3'-processing catalyzed by ELAC2, retains the tRNA product after ELAC2 processing and presents the nascent tRNA to the mitochondrial CCA tRNA nucleotidyltransferase TRNT1 enzyme. Associates with mitochondrial DNA complexes at the nucleoids to initiate RNA processing and ribosome assembly. In Bos taurus (Bovine), this protein is 3-hydroxyacyl-CoA dehydrogenase type-2 (HSD17B10).